The primary structure comprises 159 residues: Ribosomal RNA large subunit methyltransferase H (159 aa).

S-adenosyl-L-methionine-binding positions include L76, G108, and 127 to 132 (LSDMTF).

The protein belongs to the RNA methyltransferase RlmH family. Homodimer.

It is found in the cytoplasm. It catalyses the reaction pseudouridine(1915) in 23S rRNA + S-adenosyl-L-methionine = N(3)-methylpseudouridine(1915) in 23S rRNA + S-adenosyl-L-homocysteine + H(+). Its function is as follows. Specifically methylates the pseudouridine at position 1915 (m3Psi1915) in 23S rRNA. The protein is Ribosomal RNA large subunit methyltransferase H of Acetivibrio thermocellus (strain ATCC 27405 / DSM 1237 / JCM 9322 / NBRC 103400 / NCIMB 10682 / NRRL B-4536 / VPI 7372) (Clostridium thermocellum).